Here is a 655-residue protein sequence, read N- to C-terminus: Mannosyl-oligosaccharide 1,2-alpha-mannosidase IA (655 aa).

Topologically, residues 1–43 are cytoplasmic; that stretch reads MPVGGLLPLFSSPGGGGLGSGLGGGLGGGRKGSGPAAFRLTEK. The chain crosses the membrane as a helical; Signal-anchor for type II membrane protein span at residues 44 to 64; that stretch reads FVLLLVFSAFITLCFGAIFFL. Over 65–655 the chain is Lumenal; sequence PDSSKLLSGV…QKKEIDGKEK (591 aa). Cys478 and Cys510 are joined by a disulfide. The N-linked (GlcNAc...) asparagine glycan is linked to Asn515. Glu524 functions as the Proton donor in the catalytic mechanism. Residue Thr635 coordinates Ca(2+).

This sequence belongs to the glycosyl hydrolase 47 family. It depends on Ca(2+) as a cofactor. N-linked glycan at Asn-515 consists of Man(6)-GlcNAc(2).

Its subcellular location is the golgi apparatus membrane. It carries out the reaction N(4)-(alpha-D-Man-(1-&gt;2)-alpha-D-Man-(1-&gt;2)-alpha-D-Man-(1-&gt;3)-[alpha-D-Man-(1-&gt;2)-alpha-D-Man-(1-&gt;3)-[alpha-D-Man-(1-&gt;2)-alpha-D-Man-(1-&gt;6)]-alpha-D-Man-(1-&gt;6)]-beta-D-Man-(1-&gt;4)-beta-D-GlcNAc-(1-&gt;4)-beta-D-GlcNAc)-L-asparaginyl-[protein] (N-glucan mannose isomer 9A1,2,3B1,2,3) + 4 H2O = N(4)-(alpha-D-Man-(1-&gt;3)-[alpha-D-Man-(1-&gt;3)-[alpha-D-Man-(1-&gt;6)]-alpha-D-Man-(1-&gt;6)]-beta-D-Man-(1-&gt;4)-beta-D-GlcNAc-(1-&gt;4)-beta-D-GlcNAc)-L-asparaginyl-[protein] (N-glucan mannose isomer 5A1,2) + 4 beta-D-mannose. The enzyme catalyses N(4)-(alpha-D-Man-(1-&gt;2)-alpha-D-Man-(1-&gt;2)-alpha-D-Man-(1-&gt;3)-[alpha-D-Man-(1-&gt;3)-[alpha-D-Man-(1-&gt;2)-alpha-D-Man-(1-&gt;6)]-alpha-D-Man-(1-&gt;6)]-beta-D-Man-(1-&gt;4)-beta-D-GlcNAc-(1-&gt;4)-beta-D-GlcNAc)-L-asparaginyl-[protein] (N-glucan mannose isomer 8A1,2,3B1,3) + 3 H2O = N(4)-(alpha-D-Man-(1-&gt;3)-[alpha-D-Man-(1-&gt;3)-[alpha-D-Man-(1-&gt;6)]-alpha-D-Man-(1-&gt;6)]-beta-D-Man-(1-&gt;4)-beta-D-GlcNAc-(1-&gt;4)-beta-D-GlcNAc)-L-asparaginyl-[protein] (N-glucan mannose isomer 5A1,2) + 3 beta-D-mannose. It participates in protein modification; protein glycosylation. With respect to regulation, inhibited by both 1-deoxymannojirimycin and kifunensine. In terms of biological role, involved in the maturation of Asn-linked oligosaccharides. Progressively trim alpha-1,2-linked mannose residues from Man(9)GlcNAc(2) to produce Man(5)GlcNAc(2). The polypeptide is Mannosyl-oligosaccharide 1,2-alpha-mannosidase IA (Man1a1) (Mus musculus (Mouse)).